We begin with the raw amino-acid sequence, 240 residues long: MRNVTRSHMVLHQIQSVLKKYEEVSAQELYESLDKGTVQREFGVRSVDLSRLSVSEEQFSELLLLFKLYSDQQQQSSIEFVATVPSEVDVRLRKTIAVIREMIHGAQNTILVTGYAVSEYVDEIMERVLEKALAGVNVDIFLDRNPQTDRYIENIRGRNLPSNFNVYVYKGSQGYSSLHAKVIMVDEEKAFVSSANLSYNGIVNNIEIGTLVGGEKILVIKNVLLELVKNNYFEKIIWYA.

The PLD phosphodiesterase domain occupies 174–201 (GYSSLHAKVIMVDEEKAFVSSANLSYNG). Catalysis depends on residues His-179, Lys-181, and Asp-186.

This sequence belongs to the phospholipase D family.

Its subcellular location is the cytoplasm. In terms of biological role, component of antiviral defense system DISARM (defense island system associated with restriction-modification), composed of DrmE, DrmA, DrmB, DrmC and DrmMII. DISARM is probably a multi-gene restriction module, this subunit is probably a phospholipase or nuclease. Expression of DISARM in B.subtilis (strain BEST7003) confers resistance to phages Nf, phi29, phi105, phi3T, SPO1, SPR and SPP1. Protection is over 10(7)-fold against phi3T, 10(4)-10(5)-fold against Nf, phi29, phi105 and SPR, 100-fold against SPO1 and 10-fold against SPP1. DISARM does not interfere with phage adsorption, but instead interferes with (phi3T) DNA replication early in its cycle, preventing replication, circularization and lysogeny and probably causes phage DNA degradation (DNA is degraded in SPP1-infected cells). This is DISARM protein DrmC from Bacillus paralicheniformis (strain ATCC 9945a / NCIMB 11709 / CD-2).